The sequence spans 297 residues: Undecaprenyl-diphosphatase (297 aa).

The next 7 membrane-spanning stretches (helical) occupy residues 39-59 (PGAAYSAVIQLGTVAAVLIYF), 85-105 (ARLAWFVLVGTLPVGIAGLTL), 113-133 (FRSLYVISGSLIVLALILLVV), 151-171 (GILIGMWQALALIPGASRSGT), 190-210 (SFLLSIPATTLAGVFELKHLL), 220-240 (ALWVGTLVAFASGMAAIAWLL), and 249-269 (LVFVVYRVALGVLLLVLLQTG).

It belongs to the UppP family.

Its subcellular location is the cell inner membrane. The catalysed reaction is di-trans,octa-cis-undecaprenyl diphosphate + H2O = di-trans,octa-cis-undecaprenyl phosphate + phosphate + H(+). Its function is as follows. Catalyzes the dephosphorylation of undecaprenyl diphosphate (UPP). Confers resistance to bacitracin. This Myxococcus xanthus (strain DK1622) protein is Undecaprenyl-diphosphatase.